The following is an 82-amino-acid chain: Probable glutamyl-tRNA(Gln) amidotransferase subunit C (82 aa).

Belongs to the GatC family. As to quaternary structure, heterotrimer of A, B and C subunits.

It carries out the reaction L-glutamyl-tRNA(Gln) + L-glutamine + ATP + H2O = L-glutaminyl-tRNA(Gln) + L-glutamate + ADP + phosphate + H(+). The catalysed reaction is L-aspartyl-tRNA(Asn) + L-glutamine + ATP + H2O = L-asparaginyl-tRNA(Asn) + L-glutamate + ADP + phosphate + 2 H(+). Its function is as follows. Allows the formation of correctly charged Asn-tRNA(Asn) or Gln-tRNA(Gln) through the transamidation of misacylated Asp-tRNA(Asn) or Glu-tRNA(Gln) in organisms which lack either or both of asparaginyl-tRNA or glutaminyl-tRNA synthetases. The reaction takes place in the presence of glutamine and ATP through an activated phospho-Asp-tRNA(Asn) or phospho-Glu-tRNA(Gln). The sequence is that of Probable glutamyl-tRNA(Gln) amidotransferase subunit C from Methanocaldococcus jannaschii (strain ATCC 43067 / DSM 2661 / JAL-1 / JCM 10045 / NBRC 100440) (Methanococcus jannaschii).